Reading from the N-terminus, the 320-residue chain is 4-hydroxy-3-methylbut-2-enyl diphosphate reductase (320 aa).

C12 provides a ligand contact to [4Fe-4S] cluster. (2E)-4-hydroxy-3-methylbut-2-enyl diphosphate is bound by residues H41 and H74. Residues H41 and H74 each contribute to the dimethylallyl diphosphate site. Isopentenyl diphosphate is bound by residues H41 and H74. Residue C96 participates in [4Fe-4S] cluster binding. Residue H124 participates in (2E)-4-hydroxy-3-methylbut-2-enyl diphosphate binding. H124 lines the dimethylallyl diphosphate pocket. Position 124 (H124) interacts with isopentenyl diphosphate. Catalysis depends on E126, which acts as the Proton donor. Residue T167 participates in (2E)-4-hydroxy-3-methylbut-2-enyl diphosphate binding. C197 provides a ligand contact to [4Fe-4S] cluster. 4 residues coordinate (2E)-4-hydroxy-3-methylbut-2-enyl diphosphate: S225, S226, N227, and S269. Dimethylallyl diphosphate-binding residues include S225, S226, N227, and S269. S225, S226, N227, and S269 together coordinate isopentenyl diphosphate.

The protein belongs to the IspH family. It depends on [4Fe-4S] cluster as a cofactor.

It catalyses the reaction isopentenyl diphosphate + 2 oxidized [2Fe-2S]-[ferredoxin] + H2O = (2E)-4-hydroxy-3-methylbut-2-enyl diphosphate + 2 reduced [2Fe-2S]-[ferredoxin] + 2 H(+). The catalysed reaction is dimethylallyl diphosphate + 2 oxidized [2Fe-2S]-[ferredoxin] + H2O = (2E)-4-hydroxy-3-methylbut-2-enyl diphosphate + 2 reduced [2Fe-2S]-[ferredoxin] + 2 H(+). It functions in the pathway isoprenoid biosynthesis; dimethylallyl diphosphate biosynthesis; dimethylallyl diphosphate from (2E)-4-hydroxy-3-methylbutenyl diphosphate: step 1/1. Its pathway is isoprenoid biosynthesis; isopentenyl diphosphate biosynthesis via DXP pathway; isopentenyl diphosphate from 1-deoxy-D-xylulose 5-phosphate: step 6/6. Its function is as follows. Catalyzes the conversion of 1-hydroxy-2-methyl-2-(E)-butenyl 4-diphosphate (HMBPP) into a mixture of isopentenyl diphosphate (IPP) and dimethylallyl diphosphate (DMAPP). Acts in the terminal step of the DOXP/MEP pathway for isoprenoid precursor biosynthesis. The polypeptide is 4-hydroxy-3-methylbut-2-enyl diphosphate reductase (Francisella tularensis subsp. novicida (strain U112)).